A 1052-amino-acid polypeptide reads, in one-letter code: Carboxylic acid reductase (1052 aa).

Residues 21–344 (RALNEPNREW…ATEFTPFPFY (324 aa)) form an adenylation (A) domain region. AMP contacts are provided by residues 334 to 335 (SA), Thr339, and 419 to 422 (YQGR). Residues 560–643 (SSSDALIVSI…RLADYLLSIV (84 aa)) form the Carrier domain. At Ser595 the chain carries O-(pantetheine 4'-phosphoryl)serine. A carboxylic acid reductase (R) domain region spans residues 684 to 979 (GQVVVITGTT…QKIVPLDEWL (296 aa)). NADP(+) contacts are provided by residues 693-696 (TGGI), Arg718, 774-776 (NQW), Ser814, Tyr844, and Lys848.

Belongs to the adenylate-forming reductase family. Mg(2+) serves as cofactor.

It catalyses the reaction an aromatic aldehyde + AMP + diphosphate + NADP(+) = an aromatic carboxylate + ATP + NADPH + H(+). It carries out the reaction a carboxylate + ATP + NADPH + H(+) = an aldehyde + AMP + diphosphate + NADP(+). The enzyme catalyses benzoate + ATP + NADPH + H(+) = benzaldehyde + AMP + diphosphate + NADP(+). The catalysed reaction is (E)-cinnamate + ATP + NADPH + H(+) = (E)-cinnamaldehyde + AMP + diphosphate + NADP(+). It catalyses the reaction piperonylate + ATP + NADPH + H(+) = piperonal + AMP + diphosphate + NADP(+). It carries out the reaction salicylate + ATP + NADPH + H(+) = salicylaldehyde + AMP + diphosphate + NADP(+). The enzyme catalyses 3-hydroxybenzoate + ATP + NADPH + H(+) = 3-hydroxybenzaldehyde + AMP + diphosphate + NADP(+). The catalysed reaction is 2-methoxybenzoate + ATP + NADPH + H(+) = 2-methoxybenzaldehyde + AMP + diphosphate + NADP(+). It catalyses the reaction 3-methoxybenzoate + ATP + NADPH + H(+) = 3-methoxybenzaldehyde + AMP + diphosphate + NADP(+). It carries out the reaction 4-hydroxybenzoate + ATP + NADPH + H(+) = 4-hydroxybenzaldehyde + AMP + diphosphate + NADP(+). The enzyme catalyses 4-methoxybenzoate + ATP + NADPH + H(+) = 4-methoxybenzaldehyde + AMP + diphosphate + NADP(+). The catalysed reaction is 3-phenylpropanoate + ATP + NADPH + H(+) = 3-phenylpropanal + AMP + diphosphate + NADP(+). It catalyses the reaction picolinate + ATP + NADPH + H(+) = picolinal + AMP + diphosphate + NADP(+). It carries out the reaction propanoate + ATP + NADPH + H(+) = propanal + AMP + diphosphate + NADP(+). The enzyme catalyses butanoate + ATP + NADPH + H(+) = butanal + AMP + diphosphate + NADP(+). The catalysed reaction is pentanoate + ATP + NADPH + H(+) = pentanal + AMP + diphosphate + NADP(+). It catalyses the reaction hexanoate + ATP + NADPH + H(+) = hexanal + AMP + diphosphate + NADP(+). It carries out the reaction heptanoate + ATP + NADPH + H(+) = heptanal + AMP + diphosphate + NADP(+). The enzyme catalyses octanoate + ATP + NADPH + H(+) = octanal + AMP + diphosphate + NADP(+). The catalysed reaction is nonanoate + ATP + NADPH + H(+) = nonanal + AMP + diphosphate + NADP(+). Functionally, carboxylic acid reductase that shows a broad range of substrate specificity towards aromatic acids, especially to phenyl carboxylic and phenyl acrylic acids, to convert them into their respective aldehydes. Also able to use aliphatic acids as substrates. The protein is Carboxylic acid reductase of Neurospora crassa (strain ATCC 24698 / 74-OR23-1A / CBS 708.71 / DSM 1257 / FGSC 987).